The sequence spans 1051 residues: Ubiquitin carboxyl-terminal hydrolase 28 (1051 aa).

Residues 60–82 are disordered; sequence DQRVKEPSHDTTAAEPSEVEESA. The residue at position 67 (Ser-67) is a Phosphoserine. Residues 97 to 116 enclose the UIM domain; sequence DNKDDLQAAIALSLLESPNI. Lys-99 is covalently cross-linked (Glycyl lysine isopeptide (Lys-Gly) (interchain with G-Cter in SUMO2)). A compositionally biased stretch (basic and acidic residues) spans 121–135; it reads RDLNRAHEANSAETK. The tract at residues 121–140 is disordered; that stretch reads RDLNRAHEANSAETKRSKRK. One can recognise a USP domain in the interval 162-655; the sequence is VGLKNVGNTC…SAYCLMYIND (494 aa). Catalysis depends on Cys-171, which acts as the Nucleophile. At Ser-376 the chain carries Phosphoserine. The interval 483 to 538 is disordered; that stretch reads DLTPKESSSPESCSQNAGSTFSSPEDALPSSEGMNGPFTSPHSSLETPAPPAPRTV. 2 stretches are compositionally biased toward polar residues: residues 487–505 and 519–528; these read KESS…TFSS and PFTSPHSSLE. A Phosphoserine modification is found at Ser-555. The active-site Proton acceptor is the His-605. Residues 703-735 are disordered; that stretch reads EEQSCKIPQMESSPNSSSQDFSTSQESPAVSSH. Positions 713-730 are enriched in low complexity; it reads ESSPNSSSQDFSTSQESP. Ser-720 carries the post-translational modification Phosphoserine. Thr-1022 carries the post-translational modification Phosphothreonine.

It belongs to the peptidase C19 family. USP28 subfamily. As to quaternary structure, interacts with ZNF304. Interacts with PRKD1. Interacts with TP53BP1. Interacts with FBXW7; following DNA damage, dissociates from FBXW7 leading to degradation of MYC. Degraded upon nickel ion level or hypoxia exposure. In terms of processing, phosphorylated upon DNA damage at Ser-67 and Ser-720, by ATM or ATR. Phosphorylated by PRKD1.

It localises to the nucleus. The protein resides in the nucleoplasm. The enzyme catalyses Thiol-dependent hydrolysis of ester, thioester, amide, peptide and isopeptide bonds formed by the C-terminal Gly of ubiquitin (a 76-residue protein attached to proteins as an intracellular targeting signal).. In terms of biological role, deubiquitinase involved in DNA damage response checkpoint and MYC proto-oncogene stability. Involved in DNA damage induced apoptosis by specifically deubiquitinating proteins of the DNA damage pathway such as CLSPN. Also involved in G2 DNA damage checkpoint, by deubiquitinating CLSPN, and preventing its degradation by the anaphase promoting complex/cyclosome (APC/C). In contrast, it does not deubiquitinate PLK1. Specifically deubiquitinates MYC in the nucleoplasm, leading to prevent MYC degradation by the proteasome: acts by specifically interacting with FBXW7 (FBW7alpha) in the nucleoplasm and counteracting ubiquitination of MYC by the SCF(FBXW7) complex. Deubiquitinates ZNF304, hence preventing ZNF304 degradation by the proteasome and leading to the activated KRAS-mediated promoter hypermethylation and transcriptional silencing of tumor suppressor genes (TSGs) in a subset of colorectal cancers (CRC) cells. This is Ubiquitin carboxyl-terminal hydrolase 28 (Usp28) from Mus musculus (Mouse).